The sequence spans 871 residues: Zinc finger and BTB domain-containing protein 10 (871 aa).

2 disordered regions span residues 1-156 (MSFS…FNGR) and 177-228 (GASL…AGEG). The span at 14–26 (RGGGLVTASGGGS) shows a compositional bias: gly residues. The span at 27 to 37 (TNNNAGGEASA) shows a compositional bias: low complexity. Over residues 39-56 (PPQPQPRQPPPPAPPALQ) the composition is skewed to pro residues. A compositionally biased stretch (acidic residues) spans 65–76 (EEVELEGLEPQD). Residues 77–103 (LEASAGPAAGAAEEAKELLLPQDAGGP) show a composition bias toward low complexity. An Omega-N-methylarginine modification is found at arginine 126. A compositionally biased stretch (gly residues) spans 126 to 135 (RGGGGGGLGN). Position 210 is a phosphoserine (serine 210). Lysine 245 is covalently cross-linked (Glycyl lysine isopeptide (Lys-Gly) (interchain with G-Cter in SUMO2)). The region spanning 364-433 (CDVSIVVSGK…LYSGNLVLTS (70 aa)) is the BTB domain. Residues lysine 468, lysine 483, and lysine 497 each participate in a glycyl lysine isopeptide (Lys-Gly) (interchain with G-Cter in SUMO2) cross-link. Serine 565 carries the phosphoserine modification. Residues lysine 573, lysine 672, lysine 684, lysine 696, and lysine 706 each participate in a glycyl lysine isopeptide (Lys-Gly) (interchain with G-Cter in SUMO2) cross-link. 2 consecutive C2H2-type zinc fingers follow at residues 722–744 (LKCPHCSYVAKYRRTLKRHLLIH) and 750–772 (FSCDICGKLFTRREHVKRHSLVH). The tract at residues 812-871 (SQPGGQEGVDQGQDTEFPRDEEYEENEVGEADEELVDDGEDQNDPSRWDESGEVCMSLDD) is disordered. Residues 830-854 (RDEEYEENEVGEADEELVDDGEDQN) show a composition bias toward acidic residues.

It is found in the nucleus. In terms of biological role, may be involved in transcriptional regulation. The sequence is that of Zinc finger and BTB domain-containing protein 10 (ZBTB10) from Homo sapiens (Human).